Here is a 355-residue protein sequence, read N- to C-terminus: 3-isopropylmalate dehydrogenase (355 aa).

Residues Arg-90, Arg-100, Arg-128, and Asp-222 each coordinate substrate. The Mg(2+) site is built by Asp-222, Asp-246, and Asp-250. 280 to 292 (GSAPDIAGKGIAN) lines the NAD(+) pocket.

This sequence belongs to the isocitrate and isopropylmalate dehydrogenases family. LeuB type 1 subfamily. As to quaternary structure, homodimer. Mg(2+) is required as a cofactor. It depends on Mn(2+) as a cofactor.

The protein resides in the cytoplasm. The enzyme catalyses (2R,3S)-3-isopropylmalate + NAD(+) = 4-methyl-2-oxopentanoate + CO2 + NADH. Its pathway is amino-acid biosynthesis; L-leucine biosynthesis; L-leucine from 3-methyl-2-oxobutanoate: step 3/4. Its function is as follows. Catalyzes the oxidation of 3-carboxy-2-hydroxy-4-methylpentanoate (3-isopropylmalate) to 3-carboxy-4-methyl-2-oxopentanoate. The product decarboxylates to 4-methyl-2 oxopentanoate. This Burkholderia thailandensis (strain ATCC 700388 / DSM 13276 / CCUG 48851 / CIP 106301 / E264) protein is 3-isopropylmalate dehydrogenase.